A 186-amino-acid chain; its full sequence is Tumor necrosis factor alpha-induced protein 8-like protein 1 (186 aa).

Belongs to the TNFAIP8 family. Interacts with FBXW5; TNFAIP8L1 competes with TSC2 to bind FBXW5 increasing TSC2 stability by preventing its ubiquitination. As to expression, detected in wide variety tissues, such as neurons in brain, hepatocytes, germ cells of female and male reproductive organs, muscular tissues and variety types of cells of the epithelial origin (at protein level).

The protein resides in the cytoplasm. Acts as a negative regulator of mTOR activity. This Mus musculus (Mouse) protein is Tumor necrosis factor alpha-induced protein 8-like protein 1 (Tnfaip8l1).